The primary structure comprises 2156 residues: Oxygen-regulated protein 1 (2156 aa).

Positions 1–19 (MSDTPSTGFSIIHPTSSEG) are enriched in polar residues. The interval 1-25 (MSDTPSTGFSIIHPTSSEGQVPPPR) is disordered. Doublecortin domains follow at residues 36–118 (KRIS…VDLD) and 154–233 (RSLV…GNYD). 4 disordered regions span residues 353–375 (VSKT…RTES), 666–686 (SSVA…SRYQ), 1438–1458 (DMEE…MTSS), and 1590–1621 (DWSD…TQEK).

As to quaternary structure, interacts (via the doublecortin domains) with microtubules. Interacts with RP1L1. Interacts with MAK. Expressed in retina. Not expressed in heart, brain, placenta, lung, liver, skeletal muscle, kidney, spleen and pancreas.

It localises to the cytoplasm. It is found in the cytoskeleton. The protein resides in the cilium axoneme. Its subcellular location is the cell projection. The protein localises to the cilium. It localises to the photoreceptor outer segment. Microtubule-associated protein regulating the stability and length of the microtubule-based axoneme of photoreceptors. Required for the differentiation of photoreceptor cells, it plays a role in the organization of the outer segment of rod and cone photoreceptors ensuring the correct orientation and higher-order stacking of outer segment disks along the photoreceptor axoneme. This Homo sapiens (Human) protein is Oxygen-regulated protein 1 (RP1).